Consider the following 379-residue polypeptide: tRNA 2-selenouridine synthase (379 aa).

A Rhodanese domain is found at 17-140 (FLSGAPLLDT…MRRFLIESLE (124 aa)). Cysteine 100 (S-selanylcysteine intermediate) is an active-site residue.

It belongs to the SelU family. In terms of assembly, monomer.

It carries out the reaction 5-methylaminomethyl-2-thiouridine(34) in tRNA + selenophosphate + (2E)-geranyl diphosphate + H2O + H(+) = 5-methylaminomethyl-2-selenouridine(34) in tRNA + (2E)-thiogeraniol + phosphate + diphosphate. The catalysed reaction is 5-methylaminomethyl-2-thiouridine(34) in tRNA + (2E)-geranyl diphosphate = 5-methylaminomethyl-S-(2E)-geranyl-thiouridine(34) in tRNA + diphosphate. The enzyme catalyses 5-methylaminomethyl-S-(2E)-geranyl-thiouridine(34) in tRNA + selenophosphate + H(+) = 5-methylaminomethyl-2-(Se-phospho)selenouridine(34) in tRNA + (2E)-thiogeraniol. It catalyses the reaction 5-methylaminomethyl-2-(Se-phospho)selenouridine(34) in tRNA + H2O = 5-methylaminomethyl-2-selenouridine(34) in tRNA + phosphate. Its function is as follows. Involved in the post-transcriptional modification of the uridine at the wobble position (U34) of tRNA(Lys), tRNA(Glu) and tRNA(Gln). Catalyzes the conversion of 2-thiouridine (S2U-RNA) to 2-selenouridine (Se2U-RNA). Acts in a two-step process involving geranylation of 2-thiouridine (S2U) to S-geranyl-2-thiouridine (geS2U) and subsequent selenation of the latter derivative to 2-selenouridine (Se2U) in the tRNA chain. This chain is tRNA 2-selenouridine synthase, found in Hahella chejuensis (strain KCTC 2396).